Reading from the N-terminus, the 171-residue chain is Adenine phosphoribosyltransferase (171 aa).

This sequence belongs to the purine/pyrimidine phosphoribosyltransferase family. As to quaternary structure, homodimer.

The protein localises to the cytoplasm. The catalysed reaction is AMP + diphosphate = 5-phospho-alpha-D-ribose 1-diphosphate + adenine. It functions in the pathway purine metabolism; AMP biosynthesis via salvage pathway; AMP from adenine: step 1/1. Catalyzes a salvage reaction resulting in the formation of AMP, that is energically less costly than de novo synthesis. This Syntrophotalea carbinolica (strain DSM 2380 / NBRC 103641 / GraBd1) (Pelobacter carbinolicus) protein is Adenine phosphoribosyltransferase.